The chain runs to 470 residues: Ribosomal protein uS12 methylthiotransferase RimO (470 aa).

The interval methionine 1–arginine 27 is disordered. Residues histidine 7 to threonine 19 are compositionally biased toward polar residues. Positions proline 26–proline 141 constitute an MTTase N-terminal domain. The [4Fe-4S] cluster site is built by cysteine 35, cysteine 71, cysteine 100, cysteine 172, cysteine 176, and cysteine 179. The Radical SAM core domain occupies leucine 158 to arginine 399. One can recognise a TRAM domain in the interval glutamine 402–valine 470.

This sequence belongs to the methylthiotransferase family. RimO subfamily. [4Fe-4S] cluster is required as a cofactor.

The protein resides in the cytoplasm. The catalysed reaction is L-aspartate(89)-[ribosomal protein uS12]-hydrogen + (sulfur carrier)-SH + AH2 + 2 S-adenosyl-L-methionine = 3-methylsulfanyl-L-aspartate(89)-[ribosomal protein uS12]-hydrogen + (sulfur carrier)-H + 5'-deoxyadenosine + L-methionine + A + S-adenosyl-L-homocysteine + 2 H(+). In terms of biological role, catalyzes the methylthiolation of an aspartic acid residue of ribosomal protein uS12. The sequence is that of Ribosomal protein uS12 methylthiotransferase RimO from Cupriavidus taiwanensis (strain DSM 17343 / BCRC 17206 / CCUG 44338 / CIP 107171 / LMG 19424 / R1) (Ralstonia taiwanensis (strain LMG 19424)).